The primary structure comprises 329 residues: Probable endo-beta-1,4-glucanase B (329 aa).

Positions 1 to 18 are cleaved as a signal peptide; it reads MKFGSIVLIAAAAGSAVA. Asn-33 and Asn-96 each carry an N-linked (GlcNAc...) asparagine glycan. The active-site Proton donor is Glu-156. The active-site Nucleophile is Glu-263.

It belongs to the glycosyl hydrolase 5 (cellulase A) family.

It is found in the secreted. It carries out the reaction Endohydrolysis of (1-&gt;4)-beta-D-glucosidic linkages in cellulose, lichenin and cereal beta-D-glucans.. Has endoglucanase activity on substrates containing beta-1,4 glycosidic bonds, like in carboxymethylcellulose (CMC), hydroxyethylcellulose (HEC) and beta-glucan. Involved in the degradation of complex natural cellulosic substrates. The sequence is that of Probable endo-beta-1,4-glucanase B (eglB) from Neosartorya fischeri (strain ATCC 1020 / DSM 3700 / CBS 544.65 / FGSC A1164 / JCM 1740 / NRRL 181 / WB 181) (Aspergillus fischerianus).